We begin with the raw amino-acid sequence, 930 residues long: Protocadherin gamma-A4 (930 aa).

Residues 1–27 (MAAPYKSDRRGLIWICIFLGSLCDIRA) form the signal peptide. Cadherin domains lie at 28-132 (EQIR…APSF), 133-241 (GAQQ…APVF), 242-346 (TQPE…APEV), 347-451 (TVTS…PPTF), 452-561 (THAS…TPEI), and 569-682 (DGST…APID). At 28-691 (EQIRYSVPEE…DQEDSDITLY (664 aa)) the chain is on the extracellular side. Asn-418 and Asn-544 each carry an N-linked (GlcNAc...) asparagine glycan. The helical transmembrane segment at 692–712 (LVVAVAAVSCVFLAFVIVLLI) threads the bilayer. Over 713 to 930 (HRLRRWHSTR…KKKSGKKEKK (218 aa)) the chain is Cytoplasmic. 2 disordered regions span residues 803 to 839 (SSLQ…WPNN) and 900 to 930 (ATLT…KEKK). Residues 920–930 (NKKKSGKKEKK) are compositionally biased toward basic residues.

The protein localises to the cell membrane. Functionally, potential calcium-dependent cell-adhesion protein. May be involved in the establishment and maintenance of specific neuronal connections in the brain. This chain is Protocadherin gamma-A4, found in Mus musculus (Mouse).